Reading from the N-terminus, the 823-residue chain is DNA mismatch repair protein MutS (823 aa).

Residue 605–612 (GPNMSGKS) participates in ATP binding.

Belongs to the DNA mismatch repair MutS family.

In terms of biological role, this protein is involved in the repair of mismatches in DNA. It is possible that it carries out the mismatch recognition step. This protein has a weak ATPase activity. This is DNA mismatch repair protein MutS from Fervidobacterium nodosum (strain ATCC 35602 / DSM 5306 / Rt17-B1).